Here is a 477-residue protein sequence, read N- to C-terminus: Transmembrane and coiled-coil domain protein 3 (477 aa).

The segment at Met1–Lys24 is disordered. A Phosphoserine modification is found at Ser46. Coiled coils occupy residues Lys63–Lys83 and Lys112–Thr149. The tract at residues Ala234–Thr280 is disordered. Ser253 is modified (phosphoserine). The span at Ser258 to Thr280 shows a compositional bias: polar residues. Positions Gln284–Gln398 form a coiled coil. The next 2 membrane-spanning stretches (helical) occupy residues Val409–Val429 and Phe450–Ile470.

This sequence belongs to the TEX28 family. In terms of assembly, may form homodimers and heterodimers with TMCC2 or TMCC3 via the coiled-coil domains. Interacts with ribosomal proteins RPL4 and RPS6.

Its subcellular location is the endoplasmic reticulum membrane. The protein is Transmembrane and coiled-coil domain protein 3 of Mus musculus (Mouse).